A 265-amino-acid chain; its full sequence is Speedy protein E12 (265 aa).

The interval Met1 to Pro80 is disordered. Residues Gln13–Gln23 are compositionally biased toward low complexity. Positions Asp66–Pro80 are enriched in acidic residues.

It belongs to the Speedy/Ringo family.

The sequence is that of Speedy protein E12 from Homo sapiens (Human).